A 542-amino-acid chain; its full sequence is L-ornithine N(5)-monooxygenase (542 aa).

Residues 45 to 53 (EKHEVFRWH) and glutamine 64 contribute to the FAD site. Residue lysine 69 coordinates substrate. 218-221 (SGQS) contributes to the NADP(+) binding site. Substrate contacts are provided by residues 263-266 (NEIF) and asparagine 294. 294 to 296 (NYS) contacts NADP(+). The segment at 443–472 (FFHDSSPSTASSSTVSTPPTSPETSRFSSP) is disordered. Low complexity predominate over residues 447-472 (SSPSTASSSTVSTPPTSPETSRFSSP). Position 518–520 (518–520 (TLL)) interacts with FAD. Serine 521 contributes to the substrate binding site.

This sequence belongs to the lysine N(6)-hydroxylase/L-ornithine N(5)-oxygenase family. Homotetramer. It depends on FAD as a cofactor.

It catalyses the reaction L-ornithine + NADPH + O2 = N(5)-hydroxy-L-ornithine + NADP(+) + H2O. The enzyme catalyses L-ornithine + NADH + O2 = N(5)-hydroxy-L-ornithine + NAD(+) + H2O. Its pathway is siderophore biosynthesis. In terms of biological role, L-ornithine N(5)-monooxygenase; part of the gene cluster that mediates the biosynthesis of coprinoferrin, an acylated tripeptide hydroxamate siderophore. The biosynthesis of coprinoferrin depends on the hydroxylation of ornithine to N(5)-hydroxyornithine, catalyzed by the monooxygenase cpf2. The second step, the acylation of N(5)-hydroxy-L-ornithine to yield N(5)-hexanoyl-N(5)-hydroxyl-L-ornithine is catalyzed by a not yet identified acyltransferase. Finally, assembly of coprinoferrin is catalyzed by the nonribosomal peptide synthase (NRPS) cpf1 via amide bond formation between three N(5)-hexanoyl-N(5)-hydroxyl-L-ornithine molecules to release the linear trimer. Interestingly, proteins seemingly not directly related to biosynthesis, such as transcription factors, replication factors, and autophagy-related proteins, are conserved among the clusters homologous to the coprinoferrin cluster, suggesting that the cluster may also play developmental and cell biological functions. In Coprinopsis cinerea (strain Okayama-7 / 130 / ATCC MYA-4618 / FGSC 9003) (Inky cap fungus), this protein is L-ornithine N(5)-monooxygenase.